An 83-amino-acid polypeptide reads, in one-letter code: Small ribosomal subunit protein bS16 (83 aa).

This sequence belongs to the bacterial ribosomal protein bS16 family.

This chain is Small ribosomal subunit protein bS16, found in Pseudomonas putida (strain W619).